We begin with the raw amino-acid sequence, 496 residues long: Fibronectin type III and SPRY domain-containing protein 1 (496 aa).

Residues 4 to 99 adopt a coiled-coil conformation; the sequence is QREALRKIIT…ALESSEELLE (96 aa). Positions 105–162 constitute a COS domain; it reads LQASDSEDFSQAAKEIKDGITMAPAFRLSLKAKVSDNMSHLMVDFAQERQMLQALKFL. The Fibronectin type-III domain occupies 164–268; that stretch reads VPSAPTIDLA…EPVTLETPAF (105 aa). One can recognise a B30.2/SPRY domain in the interval 290–477; that stretch reads WDAMGGKVQD…VTTGLQVPSA (188 aa). Residues 301–336 are disordered; sequence KAREKEGKGRTASPVNSPARGTPSPKRMSSGRGGRD. 2 positions are modified to omega-N-methylarginine: R310 and R320.

As to quaternary structure, oligomerization is required for binding to microtubules.

It localises to the cytoplasm. Its subcellular location is the cytoskeleton. It is found in the microtubule organizing center. The protein resides in the centrosome. The protein localises to the nucleus. It localises to the cleavage furrow. Functionally, may be involved in microtubule organization and stabilization. This chain is Fibronectin type III and SPRY domain-containing protein 1 (Fsd1), found in Mus musculus (Mouse).